The following is a 212-amino-acid chain: Adenylate kinase (212 aa).

10–15 (GAGKGT) provides a ligand contact to ATP. The NMP stretch occupies residues 30–59 (AIGDIFRTIIKTSTSEAELINNYVRQGELI). AMP-binding positions include Arg-36, 57-59 (ELI), 85-88 (GYPR), and Gln-92. Residues 122 to 160 (GRYSCKNCGKIYNRYFLQPKTDNVCDVCGSSTFDYRKDD) form an LID region. Arg-123 is a binding site for ATP. Zn(2+) is bound by residues Cys-126 and Cys-129. 132-133 (IY) contacts ATP. The Zn(2+) site is built by Cys-146 and Cys-149. Arg-157 and Arg-168 together coordinate AMP. Lys-196 lines the ATP pocket.

It belongs to the adenylate kinase family. In terms of assembly, monomer.

Its subcellular location is the cytoplasm. It carries out the reaction AMP + ATP = 2 ADP. Its pathway is purine metabolism; AMP biosynthesis via salvage pathway; AMP from ADP: step 1/1. Catalyzes the reversible transfer of the terminal phosphate group between ATP and AMP. Plays an important role in cellular energy homeostasis and in adenine nucleotide metabolism. This Rickettsia peacockii (strain Rustic) protein is Adenylate kinase.